We begin with the raw amino-acid sequence, 585 residues long: Switch-associated protein 70 (585 aa).

The PH domain occupies 210-306 (DVLKQGYMMK…WIQAIYSTIH (97 aa)). The stretch at 316–529 (HKEARQRRKE…VKKKLEMATH (214 aa)) forms a coiled coil. The disordered stretch occupies residues 347–373 (ANENKQQELESVRKKLEEAASRAADEE). Basic and acidic residues predominate over residues 351–373 (KQQELESVRKKLEEAASRAADEE).

The SWAP complex consists of NPM1, NCL, PARP1 and SWAP70. Tyrosine-phosphorylated. Spleen. Expressed only in B-cells that have been induced to switch to various Ig isotypes.

It is found in the cytoplasm. The protein resides in the cell membrane. It localises to the nucleus. The protein localises to the cell projection. Its subcellular location is the lamellipodium. It is found in the cytoskeleton. In terms of biological role, phosphatidylinositol 3,4,5-trisphosphate-dependent guanine nucleotide exchange factor (GEF) which, independently of RAS, transduces signals from tyrosine kinase receptors to RAC. It also mediates signaling of membrane ruffling. Regulates the actin cytoskeleton as an effector or adapter protein in response to agonist stimulated phosphatidylinositol (3,4)-bisphosphate production and cell protrusion. This chain is Switch-associated protein 70 (Swap70), found in Mus musculus (Mouse).